The chain runs to 422 residues: Secernin-3 (422 aa).

Residues 1 to 5 constitute a propeptide that is removed on maturation; that stretch reads MEPCS. C6 is a catalytic residue. C6 bears the Glyoxylic acid (Cys); alternate mark. C6 carries the post-translational modification Pyruvic acid (Cys); alternate.

It belongs to the peptidase C69 family. Secernin subfamily.

Functionally, plays a role in thermal nociception. This chain is Secernin-3 (SCRN3), found in Bos taurus (Bovine).